A 244-amino-acid chain; its full sequence is 3-oxoacyl-[acyl-carrier-protein] reductase FabG (244 aa).

Residues glycine 12–glutamine 15 and threonine 37 each bind NADP(+). Residues lysine 50 and glycine 53 each coordinate Ca(2+). NADP(+) is bound by residues aspartate 59 to leucine 60 and asparagine 86. A substrate-binding site is contributed by serine 138. Asparagine 145 contributes to the Ca(2+) binding site. Tyrosine 151 acts as the Proton acceptor in catalysis. Residues tyrosine 151–lysine 155 and isoleucine 184 each bind NADP(+). Ca(2+) contacts are provided by glutamine 233 and threonine 234.

Belongs to the short-chain dehydrogenases/reductases (SDR) family. In terms of assembly, homotetramer.

The catalysed reaction is a (3R)-hydroxyacyl-[ACP] + NADP(+) = a 3-oxoacyl-[ACP] + NADPH + H(+). Its pathway is lipid metabolism; fatty acid biosynthesis. Functionally, catalyzes the NADPH-dependent reduction of beta-ketoacyl-ACP substrates to beta-hydroxyacyl-ACP products, the first reductive step in the elongation cycle of fatty acid biosynthesis. This is 3-oxoacyl-[acyl-carrier-protein] reductase FabG (fabG) from Buchnera aphidicola subsp. Schizaphis graminum (strain Sg).